We begin with the raw amino-acid sequence, 301 residues long: uncharacterized protein (301 aa).

Disordered stretches follow at residues 56–126 (ESPT…ESDL) and 149–173 (LSTE…DASS). A compositionally biased stretch (basic and acidic residues) spans 71 to 82 (VQKENQKPKDLN). The segment covering 93–102 (KNSSGLVSQI) has biased composition (polar residues). Over residues 161 to 173 (SNTSSSSMSDASS) the composition is skewed to low complexity.

This is an uncharacterized protein from Caenorhabditis elegans.